Here is a 427-residue protein sequence, read N- to C-terminus: Glutamate-1-semialdehyde 2,1-aminomutase (427 aa).

The residue at position 268 (lysine 268) is an N6-(pyridoxal phosphate)lysine.

Belongs to the class-III pyridoxal-phosphate-dependent aminotransferase family. HemL subfamily. Pyridoxal 5'-phosphate is required as a cofactor.

Its subcellular location is the cytoplasm. The enzyme catalyses (S)-4-amino-5-oxopentanoate = 5-aminolevulinate. The protein operates within porphyrin-containing compound metabolism; protoporphyrin-IX biosynthesis; 5-aminolevulinate from L-glutamyl-tRNA(Glu): step 2/2. In Methanococcus maripaludis (strain C5 / ATCC BAA-1333), this protein is Glutamate-1-semialdehyde 2,1-aminomutase.